The sequence spans 427 residues: 3-phosphoshikimate 1-carboxyvinyltransferase (427 aa).

3-phosphoshikimate contacts are provided by Lys-20, Ser-21, and Arg-25. Lys-20 lines the phosphoenolpyruvate pocket. Phosphoenolpyruvate contacts are provided by Gly-92 and Arg-120. Positions 166, 168, 312, and 339 each coordinate 3-phosphoshikimate. Gln-168 contacts phosphoenolpyruvate. Catalysis depends on Asp-312, which acts as the Proton acceptor. 2 residues coordinate phosphoenolpyruvate: Arg-343 and Arg-385.

It belongs to the EPSP synthase family. As to quaternary structure, monomer.

Its subcellular location is the cytoplasm. It carries out the reaction 3-phosphoshikimate + phosphoenolpyruvate = 5-O-(1-carboxyvinyl)-3-phosphoshikimate + phosphate. Its pathway is metabolic intermediate biosynthesis; chorismate biosynthesis; chorismate from D-erythrose 4-phosphate and phosphoenolpyruvate: step 6/7. In terms of biological role, catalyzes the transfer of the enolpyruvyl moiety of phosphoenolpyruvate (PEP) to the 5-hydroxyl of shikimate-3-phosphate (S3P) to produce enolpyruvyl shikimate-3-phosphate and inorganic phosphate. The protein is 3-phosphoshikimate 1-carboxyvinyltransferase of Streptococcus pneumoniae serotype 2 (strain D39 / NCTC 7466).